Consider the following 100-residue polypeptide: Urease subunit gamma (100 aa).

The protein belongs to the urease gamma subunit family. As to quaternary structure, heterotrimer of UreA (gamma), UreB (beta) and UreC (alpha) subunits. Three heterotrimers associate to form the active enzyme.

Its subcellular location is the cytoplasm. It catalyses the reaction urea + 2 H2O + H(+) = hydrogencarbonate + 2 NH4(+). It functions in the pathway nitrogen metabolism; urea degradation; CO(2) and NH(3) from urea (urease route): step 1/1. This is Urease subunit gamma from Roseobacter denitrificans (strain ATCC 33942 / OCh 114) (Erythrobacter sp. (strain OCh 114)).